Here is a 161-residue protein sequence, read N- to C-terminus: MSKIIQVGMADFKMATAPDKLITAGLGSCIGICLYDKVIKLGSLTHIMLPSSSQAKNASNEAKFADTGLKLAIREMEKNGAQASRLLAKIAGGAQMFKFSGESDIMKIGERNSVAVKENLQLHRIKLLSSDTGGNYGRTIIFDPETGDLLVKTIGHGERII.

It belongs to the CheD family.

The catalysed reaction is L-glutaminyl-[protein] + H2O = L-glutamyl-[protein] + NH4(+). Probably deamidates glutamine residues to glutamate on methyl-accepting chemotaxis receptors (MCPs), playing an important role in chemotaxis. This is Probable chemoreceptor glutamine deamidase CheD from Syntrophomonas wolfei subsp. wolfei (strain DSM 2245B / Goettingen).